The sequence spans 174 residues: Ly6/PLAUR domain-containing protein 6 (174 aa).

An N-terminal signal peptide occupies residues 1–22 (MEPWPLMAWGLMLTAITGWIKA). One can recognise a UPAR/Ly6 domain in the interval 47-141 (FKCFTCEDAP…PRNETDAIFS (95 aa)). 6 cysteine pairs are disulfide-bonded: Cys49–Cys77, Cys52–Cys61, Cys70–Cys96, Cys102–Cys121, Cys107–Cys118, and Cys122–Cys127. Asn134 and Asn147 each carry an N-linked (GlcNAc...) asparagine glycan. A lipid anchor (GPI-anchor amidated serine) is attached at Ser149. The propeptide at 150 to 174 (AQSTQTLPLLLLSVSITSLMLHSIN) is removed in mature form.

Interacts with fzd8 and lrp6.

It is found in the cell membrane. The protein resides in the membrane raft. Acts as an important regulator of embryogenesis through its enhancement of Wnt/beta-catenin signaling. Positively regulates Wnt/beta-catenin signaling by ensuring phosphorylation of lrp6 specifically in plasma membrane rafts and its subsequent internalization into signaling-competent vesicles. Essential for the wnt8-mediated patterning of the mesoderm and neuroectoderm during gastrulation. The protein is Ly6/PLAUR domain-containing protein 6 (lypd6) of Danio rerio (Zebrafish).